Reading from the N-terminus, the 140-residue chain is MKTYVPKQVEPRWVLIDAEGKTLGRLATKIATLLRGKHRPDWTPNVAMGDFVVVVNADKIRVTGKKLEQKIYTRYSGYPGGLKKIPLEKMLATHPERVLEHAVKGMLPKGPLGRRLFKRLKVYAGPDHPHQAQRPEKLEV.

As to quaternary structure, part of the 50S ribosomal subunit.

In terms of biological role, this protein is one of the early assembly proteins of the 50S ribosomal subunit, although it is not seen to bind rRNA by itself. It is important during the early stages of 50S assembly. This chain is Large ribosomal subunit protein uL13, found in Thermus thermophilus (strain ATCC 27634 / DSM 579 / HB8).